A 389-amino-acid chain; its full sequence is NADH-quinone oxidoreductase subunit D (389 aa).

It belongs to the complex I 49 kDa subunit family. In terms of assembly, NDH-1 is composed of 14 different subunits. Subunits NuoB, C, D, E, F, and G constitute the peripheral sector of the complex.

It is found in the cell inner membrane. It catalyses the reaction a quinone + NADH + 5 H(+)(in) = a quinol + NAD(+) + 4 H(+)(out). NDH-1 shuttles electrons from NADH, via FMN and iron-sulfur (Fe-S) centers, to quinones in the respiratory chain. The immediate electron acceptor for the enzyme in this species is believed to be ubiquinone. Couples the redox reaction to proton translocation (for every two electrons transferred, four hydrogen ions are translocated across the cytoplasmic membrane), and thus conserves the redox energy in a proton gradient. The chain is NADH-quinone oxidoreductase subunit D from Rickettsia typhi (strain ATCC VR-144 / Wilmington).